Here is a 335-residue protein sequence, read N- to C-terminus: ATP-dependent 6-phosphofructokinase (335 aa).

Gly-11 contributes to the ATP binding site. ADP is bound at residue 21 to 25 (RAVVR). ATP contacts are provided by residues 72 to 73 (RY) and 102 to 105 (GDGS). Asp-103 contributes to the Mg(2+) binding site. Position 125 to 127 (125 to 127 (TID)) interacts with substrate. The active-site Proton acceptor is the Asp-127. Arg-154 serves as a coordination point for ADP. Substrate-binding positions include Arg-162 and 169 to 171 (MGR). ADP contacts are provided by residues 185–187 (GAD) and 213–215 (KKH). Residues Glu-222, Arg-244, and 250-253 (HIQR) contribute to the substrate site.

The protein belongs to the phosphofructokinase type A (PFKA) family. ATP-dependent PFK group I subfamily. Prokaryotic clade 'B1' sub-subfamily. Homotetramer. Requires Mg(2+) as cofactor.

It localises to the cytoplasm. It catalyses the reaction beta-D-fructose 6-phosphate + ATP = beta-D-fructose 1,6-bisphosphate + ADP + H(+). It participates in carbohydrate degradation; glycolysis; D-glyceraldehyde 3-phosphate and glycerone phosphate from D-glucose: step 3/4. Its activity is regulated as follows. Allosterically activated by ADP and other diphosphonucleosides, and allosterically inhibited by phosphoenolpyruvate. Its function is as follows. Catalyzes the phosphorylation of D-fructose 6-phosphate to fructose 1,6-bisphosphate by ATP, the first committing step of glycolysis. The sequence is that of ATP-dependent 6-phosphofructokinase from Streptococcus pneumoniae serotype 19F (strain G54).